We begin with the raw amino-acid sequence, 394 residues long: Serine palmitoyltransferase (394 aa).

Residues 111–112, S183, H211, and T239 each bind pyridoxal 5'-phosphate; that span reads GF. The residue at position 242 (K242) is an N6-(pyridoxal phosphate)lysine.

It belongs to the class-II pyridoxal-phosphate-dependent aminotransferase family. The cofactor is pyridoxal 5'-phosphate.

The enzyme catalyses L-serine + hexadecanoyl-CoA + H(+) = 3-oxosphinganine + CO2 + CoA. It participates in lipid metabolism; sphingolipid metabolism. Functionally, involved in de novo bacterial ceramide synthesis. Catalyzes the condensation of L-serine with palmitoyl-CoA (hexadecanoyl-CoA) to produce 3-oxosphinganine. Also capable of using alanine as substrate leading to the formation of 1-deoxysphinganine (1-deoxySa). Contributes to the levels of endogenous sphingolipids in its host. This Bacteroides thetaiotaomicron (strain ATCC 29148 / DSM 2079 / JCM 5827 / CCUG 10774 / NCTC 10582 / VPI-5482 / E50) protein is Serine palmitoyltransferase.